Here is a 255-residue protein sequence, read N- to C-terminus: Leucyl/phenylalanyl-tRNA--protein transferase (255 aa).

This sequence belongs to the L/F-transferase family.

It localises to the cytoplasm. It carries out the reaction N-terminal L-lysyl-[protein] + L-leucyl-tRNA(Leu) = N-terminal L-leucyl-L-lysyl-[protein] + tRNA(Leu) + H(+). The enzyme catalyses N-terminal L-arginyl-[protein] + L-leucyl-tRNA(Leu) = N-terminal L-leucyl-L-arginyl-[protein] + tRNA(Leu) + H(+). The catalysed reaction is L-phenylalanyl-tRNA(Phe) + an N-terminal L-alpha-aminoacyl-[protein] = an N-terminal L-phenylalanyl-L-alpha-aminoacyl-[protein] + tRNA(Phe). Functionally, functions in the N-end rule pathway of protein degradation where it conjugates Leu, Phe and, less efficiently, Met from aminoacyl-tRNAs to the N-termini of proteins containing an N-terminal arginine or lysine. The chain is Leucyl/phenylalanyl-tRNA--protein transferase from Burkholderia thailandensis (strain ATCC 700388 / DSM 13276 / CCUG 48851 / CIP 106301 / E264).